The chain runs to 473 residues: Photosystem II CP43 reaction center protein (473 aa).

The propeptide occupies 1 to 14 (MKTLYSLRRFYPVE). Thr-15 carries the post-translational modification N-acetylthreonine. A Phosphothreonine modification is found at Thr-15. 5 helical membrane-spanning segments follow: residues 69-93 (LFEV…PHLA), 134-155 (LLGP…KDRN), 178-200 (KALY…RKIT), 255-275 (KPFA…LSYS), and 291-312 (WFNN…ASQA). Glu-367 lines the [CaMn4O5] cluster pocket. A helical transmembrane segment spans residues 447–471 (RARAAAAGFEKGIDRDLEPVLSMTP).

It belongs to the PsbB/PsbC family. PsbC subfamily. As to quaternary structure, PSII is composed of 1 copy each of membrane proteins PsbA, PsbB, PsbC, PsbD, PsbE, PsbF, PsbH, PsbI, PsbJ, PsbK, PsbL, PsbM, PsbT, PsbX, PsbY, PsbZ, Psb30/Ycf12, at least 3 peripheral proteins of the oxygen-evolving complex and a large number of cofactors. It forms dimeric complexes. It depends on Binds multiple chlorophylls and provides some of the ligands for the Ca-4Mn-5O cluster of the oxygen-evolving complex. It may also provide a ligand for a Cl- that is required for oxygen evolution. PSII binds additional chlorophylls, carotenoids and specific lipids. as a cofactor.

It localises to the plastid. The protein resides in the chloroplast thylakoid membrane. Its function is as follows. One of the components of the core complex of photosystem II (PSII). It binds chlorophyll and helps catalyze the primary light-induced photochemical processes of PSII. PSII is a light-driven water:plastoquinone oxidoreductase, using light energy to abstract electrons from H(2)O, generating O(2) and a proton gradient subsequently used for ATP formation. This is Photosystem II CP43 reaction center protein from Acorus calamus var. americanus (American sweet flag).